Here is a 242-residue protein sequence, read N- to C-terminus: MNPADSDHPQLPNIKIHHPPSPRHSHHHHSSSTPSSAATPTPTAGARRKIGVAVDLSEESSFAVRWAVDHYIRPGDAVVLLHVSPTSVLFGADWGPLPLKTQIEDPNAQPQPSQEDFDAFTSTKVADLAKPLKELGFPYKIHIVKDHDMRERLCLEIERLGLSAVIMGSRGFGAEKKRGSDGKLGSVSDYCVHHCVCPVVVVRYPDDRDGPVPIVTVKSGGDDDGDVVAASASAHHEHIKDE.

The transit peptide at 1–43 (MNPADSDHPQLPNIKIHHPPSPRHSHHHHSSSTPSSAATPTPT) directs the protein to the chloroplast. Residues 1 to 45 (MNPADSDHPQLPNIKIHHPPSPRHSHHHHSSSTPSSAATPTPTAG) form a disordered region. The segment covering 15 to 30 (KIHHPPSPRHSHHHHS) has biased composition (basic residues). Position 19 (proline 19) interacts with ATP. Position 21 is a phosphoserine; by MAPK3 and MAPK6 (serine 21). The span at 31–44 (SSTPSSAATPTPTA) shows a compositional bias: low complexity. Residues valine 83, 168–178 (GSRGFGAEKKR), and 186–188 (SVS) contribute to the ATP site. Serine 219 is subject to Phosphoserine.

Belongs to the universal stress protein A family. In terms of processing, phosphorylated by MAPK3 and MAPK6 after pathogenic elicitation (e.g. bacterial flg22, Phytophthora infestans zoospores and xylanase).

Its subcellular location is the plastid. It localises to the chloroplast. The chain is Universal stress protein PHOS32 from Arabidopsis thaliana (Mouse-ear cress).